A 401-amino-acid chain; its full sequence is L-rhamnonate dehydratase (401 aa).

The substrate site is built by histidine 29 and arginine 55. Residues aspartate 222, glutamate 248, and glutamate 276 each coordinate Mg(2+). The Proton acceptor role is filled by histidine 325. Glutamate 345 provides a ligand contact to substrate.

Belongs to the mandelate racemase/muconate lactonizing enzyme family. RhamD subfamily. As to quaternary structure, homooctamer; tetramer of dimers. The cofactor is Mg(2+).

It carries out the reaction L-rhamnonate = 2-dehydro-3-deoxy-L-rhamnonate + H2O. Its function is as follows. Catalyzes the dehydration of L-rhamnonate to 2-keto-3-deoxy-L-rhamnonate (KDR). This Salmonella heidelberg (strain SL476) protein is L-rhamnonate dehydratase.